Here is a 240-residue protein sequence, read N- to C-terminus: Orotidine 5'-phosphate decarboxylase (240 aa).

Residues D10, K32, 59-68 (DLKLHDIPNT), T122, R183, Q192, G212, and R213 contribute to the substrate site. Residue K61 is the Proton donor of the active site.

Belongs to the OMP decarboxylase family. Type 1 subfamily. Homodimer.

It catalyses the reaction orotidine 5'-phosphate + H(+) = UMP + CO2. The protein operates within pyrimidine metabolism; UMP biosynthesis via de novo pathway; UMP from orotate: step 2/2. In terms of biological role, catalyzes the decarboxylation of orotidine 5'-monophosphate (OMP) to uridine 5'-monophosphate (UMP). The chain is Orotidine 5'-phosphate decarboxylase from Carboxydothermus hydrogenoformans (strain ATCC BAA-161 / DSM 6008 / Z-2901).